Here is a 616-residue protein sequence, read N- to C-terminus: Dihydroxy-acid dehydratase (616 aa).

A Mg(2+)-binding site is contributed by aspartate 81. A [2Fe-2S] cluster-binding site is contributed by cysteine 122. Positions 123 and 124 each coordinate Mg(2+). Lysine 124 carries the post-translational modification N6-carboxylysine. Position 195 (cysteine 195) interacts with [2Fe-2S] cluster. A Mg(2+)-binding site is contributed by glutamate 491. Residue serine 517 is the Proton acceptor of the active site.

Belongs to the IlvD/Edd family. In terms of assembly, homodimer. [2Fe-2S] cluster is required as a cofactor. Mg(2+) serves as cofactor.

It catalyses the reaction (2R)-2,3-dihydroxy-3-methylbutanoate = 3-methyl-2-oxobutanoate + H2O. The catalysed reaction is (2R,3R)-2,3-dihydroxy-3-methylpentanoate = (S)-3-methyl-2-oxopentanoate + H2O. It functions in the pathway amino-acid biosynthesis; L-isoleucine biosynthesis; L-isoleucine from 2-oxobutanoate: step 3/4. The protein operates within amino-acid biosynthesis; L-valine biosynthesis; L-valine from pyruvate: step 3/4. Functions in the biosynthesis of branched-chain amino acids. Catalyzes the dehydration of (2R,3R)-2,3-dihydroxy-3-methylpentanoate (2,3-dihydroxy-3-methylvalerate) into 2-oxo-3-methylpentanoate (2-oxo-3-methylvalerate) and of (2R)-2,3-dihydroxy-3-methylbutanoate (2,3-dihydroxyisovalerate) into 2-oxo-3-methylbutanoate (2-oxoisovalerate), the penultimate precursor to L-isoleucine and L-valine, respectively. The chain is Dihydroxy-acid dehydratase from Salmonella gallinarum (strain 287/91 / NCTC 13346).